The chain runs to 426 residues: Diaminobutyrate--2-oxoglutarate transaminase (426 aa).

Lysine 272 carries the N6-(pyridoxal phosphate)lysine modification.

It belongs to the class-III pyridoxal-phosphate-dependent aminotransferase family. It depends on pyridoxal 5'-phosphate as a cofactor.

It catalyses the reaction L-2,4-diaminobutanoate + 2-oxoglutarate = L-aspartate 4-semialdehyde + L-glutamate. It functions in the pathway amine and polyamine biosynthesis; ectoine biosynthesis; L-ectoine from L-aspartate 4-semialdehyde: step 1/3. In terms of biological role, catalyzes reversively the conversion of L-aspartate beta-semialdehyde (ASA) to L-2,4-diaminobutyrate (DABA) by transamination with L-glutamate. The sequence is that of Diaminobutyrate--2-oxoglutarate transaminase (ectB) from Sporosarcina pasteurii (Bacillus pasteurii).